Consider the following 1377-residue polypeptide: ATP-dependent helicase/nuclease subunit A (1377 aa).

A UvrD-like helicase ATP-binding domain is found at 4 to 478 (TSWTPGQQKV…IDLSKNFRSR (475 aa)). Position 25–32 (25–32 (AAAGSGKT)) interacts with ATP. Residues 526-867 (FLFSDTKTEL…RIMSIHKSKG (342 aa)) enclose the UvrD-like helicase C-terminal domain. Residues 1036-1065 (FEEESDEQSDEERSDEERSDGEQSDGEQSD) show a composition bias toward acidic residues. Residues 1036–1072 (FEEESDEQSDEERSDEERSDGEQSDGEQSDGEQPRKD) are disordered.

It belongs to the helicase family. AddA subfamily. As to quaternary structure, heterodimer of AddA and AddB/RexB. It depends on Mg(2+) as a cofactor.

It carries out the reaction Couples ATP hydrolysis with the unwinding of duplex DNA by translocating in the 3'-5' direction.. It catalyses the reaction ATP + H2O = ADP + phosphate + H(+). Its function is as follows. The heterodimer acts as both an ATP-dependent DNA helicase and an ATP-dependent, dual-direction single-stranded exonuclease. Recognizes the chi site generating a DNA molecule suitable for the initiation of homologous recombination. The AddA nuclease domain is required for chi fragment generation; this subunit has the helicase and 3' -&gt; 5' nuclease activities. This is ATP-dependent helicase/nuclease subunit A from Lachnoclostridium phytofermentans (strain ATCC 700394 / DSM 18823 / ISDg) (Clostridium phytofermentans).